The chain runs to 429 residues: MFLKAVVLTLALVAVTGARAEVSADQVATVMWDYFSQLSSNAKEAVEHLQKSELTQQLNALFQDKLGEVNTYAGDLQKKLVPFATELHERLAKDSEKLKEEIRKELEEVRARLLPHANEVSQKIGENVRELQQRLEPYTDQLRTQVNTQTEQLRRQLTPYAQRMERVLRENADSLQTSLRPHADQLKAKIDQNVEELKERLTPYADEFKVKIDQTVEELRRSLAPYAQDAQEKLNHQLEGLAFQMKKNAEELKARISASAEELRQRLAPLAEDMRGNLRGNTEGLQKSLAELGGHLDRHVEEFRLRVEPYGENFNKALVQQMEQLRQKLGPHAGDVEGHLSFLEKDLRDKVNSFFSTFKEKESQDNTLSLPEPEQQREQQQEQQQEQEQEQQQQQEQQQQQEQQREQQQQEQQQEQQQEQVQMLAPLES.

A signal peptide spans 1–20 (MFLKAVVLTLALVAVTGARA). Tandem repeats lie at residues 33-54 (DYFSQLSSNAKEAVEHLQKSEL), 60-81 (ALFQDKLGEVNTYAGDLQKKLV), 82-103 (PFATELHERLAKDSEKLKEEIR), 115-136 (PHANEVSQKIGENVRELQQRLE), 137-158 (PYTDQLRTQVNTQTEQLRRQLT), 159-180 (PYAQRMERVLRENADSLQTSLR), 181-202 (PHADQLKAKIDQNVEELKERLT), 203-224 (PYADEFKVKIDQTVEELRRSLA), 225-246 (PYAQDAQEKLNHQLEGLAFQMK), 247-268 (KNAEELKARISASAEELRQRLA), 269-286 (PLAEDMRGNLRGNTEGLQ), 287-308 (KSLAELGGHLDRHVEEFRLRVE), and 309-330 (PYGENFNKALVQQMEQLRQKLG). A 13 X 22 AA approximate tandem repeats region spans residues 33–330 (DYFSQLSSNA…QMEQLRQKLG (298 aa)). A disordered region spans residues 359–429 (KEKESQDNTL…QVQMLAPLES (71 aa)). Over residues 381 to 420 (QEQQQEQEQEQQQQQEQQQQQEQQREQQQQEQQQEQQQEQ) the composition is skewed to low complexity.

It belongs to the apolipoprotein A1/A4/E family. Homodimer. Post-translationally, phosphorylation sites are present in the extracellular medium. As to expression, secreted in plasma.

It localises to the secreted. Functionally, may have a role in chylomicrons and VLDL secretion and catabolism. Required for efficient activation of lipoprotein lipase by ApoC-II; potent activator of LCAT. Apoa-IV is a major component of HDL and chylomicrons. The polypeptide is Apolipoprotein A-IV (APOA4) (Macaca fascicularis (Crab-eating macaque)).